The following is a 246-amino-acid chain: Eukaryotic translation initiation factor 6 (246 aa).

Ser-174 and Ser-175 each carry phosphoserine; by CK1.

This sequence belongs to the eIF-6 family. In terms of assembly, monomer. Associates with the 60S ribosomal subunit. In terms of processing, phosphorylation at Ser-174 and Ser-175 promotes nuclear export.

The protein resides in the cytoplasm. Its subcellular location is the nucleus. It is found in the nucleolus. Binds to the 60S ribosomal subunit and prevents its association with the 40S ribosomal subunit to form the 80S initiation complex in the cytoplasm. Is also involved in ribosome biogenesis. Associates with pre-60S subunits in the nucleus and is involved in its nuclear export. The protein is Eukaryotic translation initiation factor 6 of Sordaria macrospora (strain ATCC MYA-333 / DSM 997 / K(L3346) / K-hell).